The following is a 170-amino-acid chain: Flavodoxin (170 aa).

Residues 5 to 165 enclose the Flavodoxin-like domain; that stretch reads IGLFYGTQTG…RIKSWVAQLK (161 aa).

The protein belongs to the flavodoxin family. The cofactor is FMN.

Low-potential electron donor to a number of redox enzymes. The polypeptide is Flavodoxin (isiB) (Nostoc sp. (strain PCC 7120 / SAG 25.82 / UTEX 2576)).